A 56-amino-acid chain; its full sequence is Large ribosomal subunit protein bL33 (56 aa).

This sequence belongs to the bacterial ribosomal protein bL33 family.

In Treponema denticola (strain ATCC 35405 / DSM 14222 / CIP 103919 / JCM 8153 / KCTC 15104), this protein is Large ribosomal subunit protein bL33.